A 103-amino-acid chain; its full sequence is Ig kappa-b5 chain C region (103 aa).

The region spanning 5–99 (PTVLIFPPAP…GAGSVVQSFS (95 aa)) is the Ig-like domain. Cys26 and Cys85 are disulfide-bonded.

This chain is Ig kappa-b5 chain C region, found in Oryctolagus cuniculus (Rabbit).